A 74-amino-acid polypeptide reads, in one-letter code: UPF0435 protein BCB4264_A0471 (74 aa).

Belongs to the UPF0435 family.

The chain is UPF0435 protein BCB4264_A0471 from Bacillus cereus (strain B4264).